The chain runs to 580 residues: Rho guanine nucleotide exchange factor 25 (580 aa).

Over residues Ala-48 to Cys-67 the composition is skewed to low complexity. 2 disordered regions span residues Ala-48–Ser-76 and Leu-128–Ala-157. The 177-residue stretch at Arg-160–Met-336 folds into the DH domain. An important for binding to Rho GTPases region spans residues Leu-278–Gln-299. Residues Lys-348–Glu-466 enclose the PH domain. Residues Ser-467–Arg-493 are sufficient to bind activated GNAQ. 2 disordered regions span residues Gln-482–Pro-524 and Ala-545–Leu-580. Residues Asp-509 to Asn-520 are compositionally biased toward polar residues. A compositionally biased stretch (pro residues) spans Asp-555 to Pro-566.

As to quaternary structure, interacts (via the DH domain) with POPDC1 (via the C-terminus cytoplasmic tail). Interacts with activated GNAQ and GNA11. Interacts with RHOA, CDC42 and RAC1. As to expression, isoform 1 and isoform 2 are highly expressed in excitable tissues, such as brain, heart and muscle. Also detected in kidney and liver.

The protein localises to the cell membrane. Its subcellular location is the cytoplasm. The protein resides in the myofibril. It localises to the sarcomere. Functionally, may play a role in actin cytoskeleton reorganization in different tissues since its activation induces formation of actin stress fibers. It works as a guanine nucleotide exchange factor for Rho family of small GTPases. Links specifically G alpha q/11-coupled receptors to RHOA activation. May be an important regulator of processes involved in axon and dendrite formation. In neurons seems to be an exchange factor primarily for RAC1. Involved in skeletal myogenesis. The chain is Rho guanine nucleotide exchange factor 25 (ARHGEF25) from Homo sapiens (Human).